We begin with the raw amino-acid sequence, 173 residues long: Crossover junction endodeoxyribonuclease RuvC (173 aa).

Residues Asp-8, Glu-67, and Asp-139 contribute to the active site. Residues Asp-8, Glu-67, and Asp-139 each coordinate Mg(2+).

Belongs to the RuvC family. In terms of assembly, homodimer which binds Holliday junction (HJ) DNA. The HJ becomes 2-fold symmetrical on binding to RuvC with unstacked arms; it has a different conformation from HJ DNA in complex with RuvA. In the full resolvosome a probable DNA-RuvA(4)-RuvB(12)-RuvC(2) complex forms which resolves the HJ. Mg(2+) is required as a cofactor.

Its subcellular location is the cytoplasm. It carries out the reaction Endonucleolytic cleavage at a junction such as a reciprocal single-stranded crossover between two homologous DNA duplexes (Holliday junction).. Its function is as follows. The RuvA-RuvB-RuvC complex processes Holliday junction (HJ) DNA during genetic recombination and DNA repair. Endonuclease that resolves HJ intermediates. Cleaves cruciform DNA by making single-stranded nicks across the HJ at symmetrical positions within the homologous arms, yielding a 5'-phosphate and a 3'-hydroxyl group; requires a central core of homology in the junction. The consensus cleavage sequence is 5'-(A/T)TT(C/G)-3'. Cleavage occurs on the 3'-side of the TT dinucleotide at the point of strand exchange. HJ branch migration catalyzed by RuvA-RuvB allows RuvC to scan DNA until it finds its consensus sequence, where it cleaves and resolves the cruciform DNA. The polypeptide is Crossover junction endodeoxyribonuclease RuvC (Shewanella pealeana (strain ATCC 700345 / ANG-SQ1)).